The following is a 359-amino-acid chain: NAC domain-containing protein 45 (359 aa).

The NAC domain occupies 19–185 (LPPGFRFHPT…EWVVCKVFHK (167 aa)). Residues 130–191 (VGMKKTLVFY…VFHKKGDDRE (62 aa)) mediate DNA binding.

As to expression, expressed in roots. Expressed at low levels in leaves, stems and panicles.

It is found in the nucleus. Functionally, transcription activator involved in responses to drought stress and salt stress. Transactivates the stress response genes LEA19 and PM19L. The chain is NAC domain-containing protein 45 from Oryza sativa subsp. japonica (Rice).